The following is a 170-amino-acid chain: Arginine repressor (170 aa).

This sequence belongs to the ArgR family.

The protein resides in the cytoplasm. Its pathway is amino-acid biosynthesis; L-arginine biosynthesis [regulation]. In terms of biological role, regulates arginine biosynthesis genes. The chain is Arginine repressor from Mycobacterium tuberculosis (strain ATCC 25177 / H37Ra).